The sequence spans 558 residues: Small ribosomal subunit protein bS1 (558 aa).

6 consecutive S1 motif domains span residues 21–87, 105–171, 192–260, 277–347, 364–434, and 451–520; these read GSII…LSRE, SETV…VSRR, GMHV…LGLK, ETKL…LGLK, GVHV…LGIK, and GAII…LTIH.

The protein belongs to the bacterial ribosomal protein bS1 family.

In terms of biological role, binds mRNA; thus facilitating recognition of the initiation point. It is needed to translate mRNA with a short Shine-Dalgarno (SD) purine-rich sequence. This Buchnera aphidicola subsp. Acyrthosiphon pisum (strain APS) (Acyrthosiphon pisum symbiotic bacterium) protein is Small ribosomal subunit protein bS1 (rpsA).